A 375-amino-acid chain; its full sequence is Erythronate-4-phosphate dehydrogenase (375 aa).

Residues Ser45 and Thr66 each coordinate substrate. NAD(+)-binding residues include Asp146 and Thr175. The active site involves Arg208. Residue Asp232 participates in NAD(+) binding. Residue Glu237 is part of the active site. His254 (proton donor) is an active-site residue. Residue Gly257 participates in NAD(+) binding. Tyr258 is a binding site for substrate.

This sequence belongs to the D-isomer specific 2-hydroxyacid dehydrogenase family. PdxB subfamily. Homodimer.

The protein localises to the cytoplasm. It catalyses the reaction 4-phospho-D-erythronate + NAD(+) = (R)-3-hydroxy-2-oxo-4-phosphooxybutanoate + NADH + H(+). Its pathway is cofactor biosynthesis; pyridoxine 5'-phosphate biosynthesis; pyridoxine 5'-phosphate from D-erythrose 4-phosphate: step 2/5. Catalyzes the oxidation of erythronate-4-phosphate to 3-hydroxy-2-oxo-4-phosphonooxybutanoate. The polypeptide is Erythronate-4-phosphate dehydrogenase (Yersinia pseudotuberculosis serotype O:1b (strain IP 31758)).